Consider the following 402-residue polypeptide: MTPSNYQRTRWLTLIGTIITQFALGSVYTWSLFNGALSAKLDAPVSQVAFSFGLLSLGLAISSSVAGKLQERFGVKRVTMASGILLGLGFFLTAHSDNLMMLWLSAGVLVGLADGAGYLLTLSNCVKWFPERKGLISAFAIGSYGLGSLGFKFIDTQLLETVGLEKTFVIWGAIALLMIVFGATLMKDAPKQEVKTSNGVVEKDYTLAESMRKPQYWMLAVMFLTACMSGLYVIGVAKDIAQSLAHLDVVSAANAVTVISIANLSGRLVLGILSDKIARIRVITIGQVISLVGMAALLFAPLNAVTFFAAIACVAFNFGGTITVFPSLVSEFFGLNNLAKNYGVIYLGFGIGSICGSIIASLFGGFYVTFYVIFALLILSLALSTTIRQPEQKMLREAHGSL.

At 1–11 (MTPSNYQRTRW) the chain is on the cytoplasmic side. Residues 12–34 (LTLIGTIITQFALGSVYTWSLFN) traverse the membrane as a helical segment. The Periplasmic segment spans residues 35–43 (GALSAKLDA). Residues 44 to 66 (PVSQVAFSFGLLSLGLAISSSVA) form a helical membrane-spanning segment. Topologically, residues 67–72 (GKLQER) are cytoplasmic. A helical transmembrane segment spans residues 73–95 (FGVKRVTMASGILLGLGFFLTAH). The Periplasmic portion of the chain corresponds to 96–99 (SDNL). A helical membrane pass occupies residues 100 to 122 (MMLWLSAGVLVGLADGAGYLLTL). Residues 123-134 (SNCVKWFPERKG) lie on the Cytoplasmic side of the membrane. The helical transmembrane segment at 135–154 (LISAFAIGSYGLGSLGFKFI) threads the bilayer. Topologically, residues 155 to 168 (DTQLLETVGLEKTF) are periplasmic. The helical transmembrane segment at 169 to 186 (VIWGAIALLMIVFGATLM) threads the bilayer. Topologically, residues 187-216 (KDAPKQEVKTSNGVVEKDYTLAESMRKPQY) are cytoplasmic. The chain crosses the membrane as a helical span at residues 217 to 236 (WMLAVMFLTACMSGLYVIGV). At 237-250 (AKDIAQSLAHLDVV) the chain is on the periplasmic side. Residues 251–273 (SAANAVTVISIANLSGRLVLGIL) form a helical membrane-spanning segment. Topologically, residues 274–279 (SDKIAR) are cytoplasmic. A helical transmembrane segment spans residues 280–302 (IRVITIGQVISLVGMAALLFAPL). Topologically, residues 303–306 (NAVT) are periplasmic. A helical membrane pass occupies residues 307–329 (FFAAIACVAFNFGGTITVFPSLV). Over 330 to 341 (SEFFGLNNLAKN) the chain is Cytoplasmic. Residues 342–364 (YGVIYLGFGIGSICGSIIASLFG) form a helical membrane-spanning segment. Residues 365–367 (GFY) are Periplasmic-facing. Residues 368–387 (VTFYVIFALLILSLALSTTI) form a helical membrane-spanning segment. The Cytoplasmic segment spans residues 388-402 (RQPEQKMLREAHGSL).

The protein belongs to the major facilitator superfamily. In terms of assembly, interacts with BtsS and YpdA.

The protein localises to the cell inner membrane. Its function is as follows. Part of a nutrient-sensing regulatory network composed of the two-component regulatory systems BtsS/BtsR and YpdA/YpdB, and their respective target proteins, BtsT and YhjX. This is an uncharacterized protein from Escherichia coli (strain K12).